The chain runs to 68 residues: Protein transport protein Sec61 subunit gamma (68 aa).

Residues 1–32 (MDQVTKFIEPGRQFAKDSIRLVKRCTKPDRKE) are Cytoplasmic-facing. Residues 33–61 (FQKIAVATAIGFCIMGFIGFFVKLIHIPI) form a helical membrane-spanning segment. Residues 62–68 (NNIIVGS) are Extracellular-facing.

This sequence belongs to the SecE/SEC61-gamma family. As to quaternary structure, heterotrimeric complex composed of SEC61-alpha, SEC61-beta and SEC61-gamma.

It localises to the endoplasmic reticulum membrane. Functionally, necessary for protein translocation in the endoplasmic reticulum. The chain is Protein transport protein Sec61 subunit gamma (SEC61G) from Gryllotalpa orientalis (Oriental mole cricket).